A 70-amino-acid chain; its full sequence is MKTGIHPNYAEITATCTCGNIIKVNSTAGKNLHLDVCGACHPFYTGTQKVVDTGGRIDKFNKRFGMLGKK.

C16, C18, C37, and C40 together coordinate Zn(2+).

It belongs to the bacterial ribosomal protein bL31 family. Type A subfamily. As to quaternary structure, part of the 50S ribosomal subunit. It depends on Zn(2+) as a cofactor.

Binds the 23S rRNA. The chain is Large ribosomal subunit protein bL31 from Shewanella frigidimarina (strain NCIMB 400).